The chain runs to 624 residues: tRNA uridine 5-carboxymethylaminomethyl modification enzyme MnmG (624 aa).

FAD is bound by residues 14–19 (GGGHAG), Val-126, and Ser-181. 273 to 287 (GPRYCPSIEDKVVRF) provides a ligand contact to NAD(+). Gln-370 contacts FAD.

Belongs to the MnmG family. In terms of assembly, homodimer. Heterotetramer of two MnmE and two MnmG subunits. FAD serves as cofactor.

It is found in the cytoplasm. NAD-binding protein involved in the addition of a carboxymethylaminomethyl (cmnm) group at the wobble position (U34) of certain tRNAs, forming tRNA-cmnm(5)s(2)U34. This Geotalea uraniireducens (strain Rf4) (Geobacter uraniireducens) protein is tRNA uridine 5-carboxymethylaminomethyl modification enzyme MnmG.